Consider the following 530-residue polypeptide: Membrane-associated transporter protein (530 aa).

Residues 1-46 lie on the Cytoplasmic side of the membrane; sequence MGSNSGQAGRHIYKSLADDGPFDSVEPPKRPTSRLIMHSMAMFGRE. A helical membrane pass occupies residues 47–67; sequence FCYAVEAAYVTPVLLSVGLPS. Serine 68 is a topological domain (extracellular). Residues 69–89 traverse the membrane as a helical segment; sequence LYSIVWFLSPILGFLLQPVVG. Over 90–110 the chain is Cytoplasmic; that stretch reads SASDHCRSRWGRRRPYILTLG. A helical transmembrane segment spans residues 111–131; it reads VMMLVGMALYLNGATVVAALI. Residues 132-138 lie on the Extracellular side of the membrane; the sequence is ANPRRKL. The helical transmembrane segment at 139-159 threads the bilayer; it reads VWAISVTMIGVVLFDFAADFI. Residues 160–184 lie on the Cytoplasmic side of the membrane; that stretch reads DGPIKAYLFDVCSHQDKEKGLHYHA. Residues 185-205 form a helical membrane-spanning segment; it reads LFTGFGGALGYLLGAIDWAHL. Topologically, residues 206–216 are extracellular; sequence ELGRLLGTEFQ. A helical transmembrane segment spans residues 217–237; the sequence is VMFFFSALVLTLCFTVHLCSI. At 238 to 318 the chain is on the cytoplasmic side; the sequence is SEAPLTEVAK…ALVNMPPHYR (81 aa). A helical membrane pass occupies residues 319 to 339; that stretch reads YLCISHLIGWTAFLSNMLFFT. Topologically, residues 340-366 are extracellular; the sequence is DFMGQIVYRGDPYSAHNSTEFLIYERG. Asparagine 356 carries N-linked (GlcNAc...) asparagine glycosylation. The chain crosses the membrane as a helical span at residues 367 to 387; it reads VEVGCWGLCINSVFSSLYSYF. The Cytoplasmic portion of the chain corresponds to 388 to 398; that stretch reads QKVLVSYIGLK. Residues 399-419 traverse the membrane as a helical segment; that stretch reads GLYFTGYLLFGLGTGFIGLFP. The Extracellular segment spans residues 420-425; that stretch reads NVYSTL. The chain crosses the membrane as a helical span at residues 426–446; that stretch reads VLCSLFGVMSSTLYTVPFNLI. At 447–477 the chain is on the cytoplasmic side; it reads TEYHREEEKERQQAPGGDPDNSVRGKGMDCA. A helical membrane pass occupies residues 478 to 498; sequence TLTCMVQLAQILVGGGLGFLV. At 499–504 the chain is on the extracellular side; that stretch reads NTAGTV. The chain crosses the membrane as a helical span at residues 505-525; sequence VVVVITASAVALIGCCFVALF. The Cytoplasmic portion of the chain corresponds to 526–530; the sequence is VRYVD.

The protein belongs to the glycoside-pentoside-hexuronide (GPH) cation symporter transporter (TC 2.A.2) family. Interacts with TYRP1. Expressed in mature melanocytes.

Its subcellular location is the melanosome membrane. It catalyses the reaction sucrose(out) + H(+)(out) = sucrose(in) + H(+)(in). The catalysed reaction is D-glucose(out) + H(+)(out) = D-glucose(in) + H(+)(in). Its function is as follows. Proton-associated glucose and sucrose transporter. May be able to transport also fructose. Expressed at a late melanosome maturation stage where functions as proton/glucose exporter which increase lumenal pH by decreasing glycolysis. Regulates melanogenesis by maintaining melanosome neutralization that is initially initiated by transient OCA2 and required for a proper function of the tyrosinase TYR. This is Membrane-associated transporter protein from Homo sapiens (Human).